We begin with the raw amino-acid sequence, 474 residues long: 2-succinylbenzoate--CoA ligase (474 aa).

The protein belongs to the ATP-dependent AMP-binding enzyme family. MenE subfamily.

It catalyses the reaction 2-succinylbenzoate + ATP + CoA = 2-succinylbenzoyl-CoA + AMP + diphosphate. The protein operates within quinol/quinone metabolism; 1,4-dihydroxy-2-naphthoate biosynthesis; 1,4-dihydroxy-2-naphthoate from chorismate: step 5/7. It functions in the pathway quinol/quinone metabolism; menaquinone biosynthesis. Its function is as follows. Converts 2-succinylbenzoate (OSB) to 2-succinylbenzoyl-CoA (OSB-CoA). The polypeptide is 2-succinylbenzoate--CoA ligase (Staphylococcus epidermidis (strain ATCC 12228 / FDA PCI 1200)).